The primary structure comprises 90 residues: Putative membrane protein insertion efficiency factor (90 aa).

It belongs to the UPF0161 family.

It is found in the cell inner membrane. Could be involved in insertion of integral membrane proteins into the membrane. The polypeptide is Putative membrane protein insertion efficiency factor (Thermosynechococcus vestitus (strain NIES-2133 / IAM M-273 / BP-1)).